Consider the following 608-residue polypeptide: 1-deoxy-D-xylulose-5-phosphate synthase (608 aa).

Thiamine diphosphate contacts are provided by residues His-66 and 107 to 109 (GHA). Asp-138 contributes to the Mg(2+) binding site. Thiamine diphosphate is bound by residues 139–140 (GA), Asn-167, Phe-277, and Glu-350. Position 167 (Asn-167) interacts with Mg(2+).

The protein belongs to the transketolase family. DXPS subfamily. Homodimer. The cofactor is Mg(2+). Requires thiamine diphosphate as cofactor.

The catalysed reaction is D-glyceraldehyde 3-phosphate + pyruvate + H(+) = 1-deoxy-D-xylulose 5-phosphate + CO2. The protein operates within metabolic intermediate biosynthesis; 1-deoxy-D-xylulose 5-phosphate biosynthesis; 1-deoxy-D-xylulose 5-phosphate from D-glyceraldehyde 3-phosphate and pyruvate: step 1/1. Its function is as follows. Catalyzes the acyloin condensation reaction between C atoms 2 and 3 of pyruvate and glyceraldehyde 3-phosphate to yield 1-deoxy-D-xylulose-5-phosphate (DXP). This is 1-deoxy-D-xylulose-5-phosphate synthase from Thermotoga sp. (strain RQ2).